The primary structure comprises 509 residues: Maturase K (509 aa).

The protein belongs to the intron maturase 2 family. MatK subfamily.

It is found in the plastid. Its function is as follows. Usually encoded in the trnK tRNA gene intron. Probably assists in splicing its own and other chloroplast group II introns. This is Maturase K from Cuscuta reflexa (Southern Asian dodder).